The chain runs to 630 residues: uncharacterized protein (630 aa).

Helical transmembrane passes span 254-274, 504-524, 564-584, and 601-621; these read MFYAVINTYLIMLISVEELRV, IALLESLSFSWLDPFYGLTSI, MIFAYIAAFVVGFINFFSMVF, and IIVISIASVLAFILIVIAVLF.

Its subcellular location is the cell membrane. This is an uncharacterized protein from Mycoplasma genitalium (strain ATCC 33530 / DSM 19775 / NCTC 10195 / G37) (Mycoplasmoides genitalium).